The following is a 203-amino-acid chain: LexA repressor 2 (203 aa).

Positions 28–48 (MREIARHLNVNGTLGVAKHLE) form a DNA-binding region, H-T-H motif. Catalysis depends on for autocatalytic cleavage activity residues Ser-122 and Lys-159.

Belongs to the peptidase S24 family. In terms of assembly, homodimer.

It carries out the reaction Hydrolysis of Ala-|-Gly bond in repressor LexA.. Its function is as follows. Represses a number of genes involved in the response to DNA damage (SOS response), including recA and lexA. In the presence of single-stranded DNA, RecA interacts with LexA causing an autocatalytic cleavage which disrupts the DNA-binding part of LexA, leading to derepression of the SOS regulon and eventually DNA repair. This Geobacter sulfurreducens (strain ATCC 51573 / DSM 12127 / PCA) protein is LexA repressor 2.